The chain runs to 37 residues: MSGYSNGGGYGGISSFALIVVLFILLIIVGTAFVGGF.

A helical transmembrane segment spans residues 16 to 36 (FALIVVLFILLIIVGTAFVGG).

Belongs to the SscA family.

It is found in the membrane. This is an uncharacterized protein from Bacillus subtilis (strain 168).